The primary structure comprises 393 residues: S-adenosylmethionine synthase (393 aa).

Glu9 lines the Mg(2+) pocket. His15 is an ATP binding site. Glu43 lines the K(+) pocket. Positions 56 and 99 each coordinate L-methionine. Residues 167 to 169 (DGK), 235 to 238 (SGRF), Asp246, 252 to 253 (RK), Ala269, Lys273, and Lys277 each bind ATP. Asp246 contacts L-methionine. An L-methionine-binding site is contributed by Lys277.

This sequence belongs to the AdoMet synthase family. Homotetramer. Mn(2+) is required as a cofactor. Requires Mg(2+) as cofactor. Co(2+) serves as cofactor. The cofactor is K(+).

The protein localises to the cytoplasm. It carries out the reaction L-methionine + ATP + H2O = S-adenosyl-L-methionine + phosphate + diphosphate. Its pathway is amino-acid biosynthesis; S-adenosyl-L-methionine biosynthesis; S-adenosyl-L-methionine from L-methionine: step 1/1. Catalyzes the formation of S-adenosylmethionine from methionine and ATP. The reaction comprises two steps that are both catalyzed by the same enzyme: formation of S-adenosylmethionine (AdoMet) and triphosphate, and subsequent hydrolysis of the triphosphate. The polypeptide is S-adenosylmethionine synthase (SAMS) (Solanum palustre (Non-tuber-performing potato)).